A 226-amino-acid polypeptide reads, in one-letter code: Ribonuclease S-7 (226 aa).

An N-terminal signal peptide occupies residues 1–27 (MGITGMIYIVTMVFSLIVLILSSSTVG). Q36 serves as a coordination point for RNA. A disulfide bond links C42 and C49. Residue H60 coordinates RNA. Catalysis depends on H60, which acts as the Proton donor. N-linked (GlcNAc...) asparagine; alternate glycosylation is found at N74 and N77. A disulfide bridge links C75 with C119. RNA is bound by residues 98-99 (NV), F108, 111-112 (KQ), and 115-116 (KH). The active site involves Q112. Catalysis depends on H116, which acts as the Proton acceptor. N-linked (GlcNAc...) asparagine glycans are attached at residues N126, N144, and N172. 2 cysteine pairs are disulfide-bonded: C183–C220 and C198–C209.

The protein belongs to the RNase T2 family. In terms of processing, the N-glycans attached at Asn-74 and Asn-77 consist of either monosaccharide (GlcNAc) or disaccharide (GlcNAc-GlcNAc) that could not be distinguished. The N-glycan at Asn-144 contains mannose and xylose, and at Asn-126 contains mannose, xylose and fucose. The N-glycan at Asn-172 consists of disaccharide (GlcNAc-GlcNAc).

It catalyses the reaction a ribonucleotidyl-ribonucleotide-RNA + H2O = a 3'-end 3'-phospho-ribonucleotide-RNA + a 5'-end dephospho-ribonucleoside-RNA + H(+). In terms of biological role, self-incompatibility (SI) is the inherited ability of a flowering plant to prevent self-fertilization by discriminating between self and non-self pollen during pollination. In many species, self-incompatibility is controlled by the single, multiallelic locus S. The sequence is that of Ribonuclease S-7 from Pyrus pyrifolia (Chinese pear).